The sequence spans 314 residues: tRNA dimethylallyltransferase (314 aa).

14 to 21 is a binding site for ATP; that stretch reads GPTASGKT. 16–21 serves as a coordination point for substrate; sequence TASGKT. Interaction with substrate tRNA regions lie at residues 39–42, 163–167, and 245–250; these read DSAQ, QRLQR, and RCVGYR.

This sequence belongs to the IPP transferase family. In terms of assembly, monomer. Requires Mg(2+) as cofactor.

The enzyme catalyses adenosine(37) in tRNA + dimethylallyl diphosphate = N(6)-dimethylallyladenosine(37) in tRNA + diphosphate. Catalyzes the transfer of a dimethylallyl group onto the adenine at position 37 in tRNAs that read codons beginning with uridine, leading to the formation of N6-(dimethylallyl)adenosine (i(6)A). This Dechloromonas aromatica (strain RCB) protein is tRNA dimethylallyltransferase.